Reading from the N-terminus, the 355-residue chain is Phytoene synthase (355 aa).

This sequence belongs to the phytoene/squalene synthase family. ATP is required as a cofactor. Mn(2+) serves as cofactor. Requires Mg(2+) as cofactor.

It functions in the pathway carotenoid biosynthesis; phytoene biosynthesis. Involved in the biosynthesis of carotenoids. Catalyzes the condensation of two molecules of geranylgeranyl diphosphate (GGPP) to give prephytoene diphosphate (PPPP) and the subsequent rearrangement of the cyclopropylcarbinyl intermediate to yield phytoene. This is Phytoene synthase (crtB) from Cereibacter sphaeroides (strain ATCC 17023 / DSM 158 / JCM 6121 / CCUG 31486 / LMG 2827 / NBRC 12203 / NCIMB 8253 / ATH 2.4.1.) (Rhodobacter sphaeroides).